We begin with the raw amino-acid sequence, 89 residues long: Large ribosomal subunit protein bL27 (89 aa).

It belongs to the bacterial ribosomal protein bL27 family.

The protein is Large ribosomal subunit protein bL27 of Cytophaga hutchinsonii (strain ATCC 33406 / DSM 1761 / CIP 103989 / NBRC 15051 / NCIMB 9469 / D465).